The following is a 328-amino-acid chain: GMP reductase (328 aa).

Cys-176 acts as the Thioimidate intermediate in catalysis. 205-228 (IIADGGIRTHGDIAKSIRFGASMI) contacts NADP(+).

It belongs to the IMPDH/GMPR family. GuaC type 2 subfamily.

It catalyses the reaction IMP + NH4(+) + NADP(+) = GMP + NADPH + 2 H(+). Functionally, catalyzes the irreversible NADPH-dependent deamination of GMP to IMP. It functions in the conversion of nucleobase, nucleoside and nucleotide derivatives of G to A nucleotides, and in maintaining the intracellular balance of A and G nucleotides. This chain is GMP reductase, found in Streptococcus pneumoniae serotype 19F (strain G54).